The primary structure comprises 198 residues: CASP-like protein 1U1 (198 aa).

The Cytoplasmic portion of the chain corresponds to 1 to 30 (MSDTPVVVIPRKGYVDGHHGYHHSYHSGLN). The chain crosses the membrane as a helical span at residues 31 to 51 (LLLRLLQAFATAAAVIVMLLA). Residues 52-73 (TQTEFTRYGEVRGRWRDYPAYK) lie on the Extracellular side of the membrane. The helical transmembrane segment at 74–94 (WFIIANAVVFVYALLATLVAC) threads the bilayer. The Cytoplasmic portion of the chain corresponds to 95–117 (CALIARRGPLSYSPSAWLTFLLD). Residues 118–138 (FVAASALMSAASAALAVALIA) traverse the membrane as a helical segment. Residues 139-165 (RNGQNLQGQHYWPTFCNYVTRFCDYAQ) are Extracellular-facing. A helical transmembrane segment spans residues 166 to 186 (GAIIASFCGFGLLALSTLLAA). Residues 187-198 (SALHHLAWHRLH) lie on the Cytoplasmic side of the membrane.

It belongs to the Casparian strip membrane proteins (CASP) family. In terms of assembly, homodimer and heterodimers.

The protein resides in the cell membrane. The protein is CASP-like protein 1U1 of Physcomitrium patens (Spreading-leaved earth moss).